A 176-amino-acid chain; its full sequence is Ribosome maturation factor RimM (176 aa).

The PRC barrel domain occupies 97 to 176 (EDEFYWRDLI…QILVDWDPDF (80 aa)).

Belongs to the RimM family. In terms of assembly, binds ribosomal protein uS19.

It localises to the cytoplasm. In terms of biological role, an accessory protein needed during the final step in the assembly of 30S ribosomal subunit, possibly for assembly of the head region. Essential for efficient processing of 16S rRNA. May be needed both before and after RbfA during the maturation of 16S rRNA. It has affinity for free ribosomal 30S subunits but not for 70S ribosomes. The chain is Ribosome maturation factor RimM from Shewanella putrefaciens (strain CN-32 / ATCC BAA-453).